Reading from the N-terminus, the 1414-residue chain is DNA-directed RNA polymerase subunit beta' (1414 aa).

Residues Cys-72, Cys-74, Cys-87, and Cys-90 each coordinate Zn(2+). Mg(2+)-binding residues include Asp-463, Asp-465, and Asp-467. Cys-811, Cys-885, Cys-892, and Cys-895 together coordinate Zn(2+).

It belongs to the RNA polymerase beta' chain family. As to quaternary structure, the RNAP catalytic core consists of 2 alpha, 1 beta, 1 beta' and 1 omega subunit. When a sigma factor is associated with the core the holoenzyme is formed, which can initiate transcription. It depends on Mg(2+) as a cofactor. Zn(2+) serves as cofactor.

It catalyses the reaction RNA(n) + a ribonucleoside 5'-triphosphate = RNA(n+1) + diphosphate. Its function is as follows. DNA-dependent RNA polymerase catalyzes the transcription of DNA into RNA using the four ribonucleoside triphosphates as substrates. In Roseobacter denitrificans (strain ATCC 33942 / OCh 114) (Erythrobacter sp. (strain OCh 114)), this protein is DNA-directed RNA polymerase subunit beta'.